We begin with the raw amino-acid sequence, 791 residues long: uncharacterized protein (791 aa).

Residues 267 to 288 form a disordered region; the sequence is APGESSAQSSYEQSTRAGDSAP. Positions 271 to 283 are enriched in polar residues; that stretch reads SSAQSSYEQSTRA.

This is an uncharacterized protein from Treponema pallidum (strain Nichols).